The primary structure comprises 691 residues: Elongation factor G 2 (691 aa).

Residues 8–287 enclose the tr-type G domain; it reads DRYRNIGIMA…AVVDYLPSPL (280 aa). GTP-binding positions include 17–24, 85–89, and 139–142; these read AHIDAGKT, DTPGH, and NKMD.

Belongs to the TRAFAC class translation factor GTPase superfamily. Classic translation factor GTPase family. EF-G/EF-2 subfamily.

It localises to the cytoplasm. Functionally, catalyzes the GTP-dependent ribosomal translocation step during translation elongation. During this step, the ribosome changes from the pre-translocational (PRE) to the post-translocational (POST) state as the newly formed A-site-bound peptidyl-tRNA and P-site-bound deacylated tRNA move to the P and E sites, respectively. Catalyzes the coordinated movement of the two tRNA molecules, the mRNA and conformational changes in the ribosome. This Myxococcus xanthus (strain DK1622) protein is Elongation factor G 2.